The chain runs to 393 residues: S-adenosylmethionine synthase (393 aa).

Glutamate 9 contacts Mg(2+). Histidine 15 lines the ATP pocket. Residue glutamate 43 participates in K(+) binding. L-methionine contacts are provided by glutamate 56 and glutamine 99. ATP-binding positions include 167-169, 235-238, aspartate 246, 252-253, alanine 269, lysine 273, and lysine 277; these read DGK, SGRF, and RK. Aspartate 246 lines the L-methionine pocket. Lysine 277 provides a ligand contact to L-methionine.

It belongs to the AdoMet synthase family. Homotetramer. Mn(2+) is required as a cofactor. Mg(2+) serves as cofactor. Requires Co(2+) as cofactor. It depends on K(+) as a cofactor.

It localises to the cytoplasm. It carries out the reaction L-methionine + ATP + H2O = S-adenosyl-L-methionine + phosphate + diphosphate. It functions in the pathway amino-acid biosynthesis; S-adenosyl-L-methionine biosynthesis; S-adenosyl-L-methionine from L-methionine: step 1/1. Functionally, catalyzes the formation of S-adenosylmethionine from methionine and ATP. The reaction comprises two steps that are both catalyzed by the same enzyme: formation of S-adenosylmethionine (AdoMet) and triphosphate, and subsequent hydrolysis of the triphosphate. The polypeptide is S-adenosylmethionine synthase (SAMS) (Brassica rapa subsp. pekinensis (Chinese cabbage)).